The sequence spans 399 residues: Tyrosine--tRNA ligase 2 (399 aa).

Positions 42-51 (PTAPDLHLGH) match the 'HIGH' region motif. Positions 226-230 (KMSKS) match the 'KMSKS' region motif. An ATP-binding site is contributed by Lys229. An S4 RNA-binding domain is found at 336 to 396 (MPVASVLNKA…GKKAFARITL (61 aa)).

It belongs to the class-I aminoacyl-tRNA synthetase family. TyrS type 2 subfamily. Homodimer.

The protein resides in the cytoplasm. It carries out the reaction tRNA(Tyr) + L-tyrosine + ATP = L-tyrosyl-tRNA(Tyr) + AMP + diphosphate + H(+). Catalyzes the attachment of tyrosine to tRNA(Tyr) in a two-step reaction: tyrosine is first activated by ATP to form Tyr-AMP and then transferred to the acceptor end of tRNA(Tyr). In Pseudomonas aeruginosa (strain ATCC 15692 / DSM 22644 / CIP 104116 / JCM 14847 / LMG 12228 / 1C / PRS 101 / PAO1), this protein is Tyrosine--tRNA ligase 2.